The following is a 116-amino-acid chain: Large ribosomal subunit protein uL18 (116 aa).

The protein belongs to the universal ribosomal protein uL18 family. In terms of assembly, part of the 50S ribosomal subunit; part of the 5S rRNA/L5/L18/L25 subcomplex. Contacts the 5S and 23S rRNAs.

This is one of the proteins that bind and probably mediate the attachment of the 5S RNA into the large ribosomal subunit, where it forms part of the central protuberance. The protein is Large ribosomal subunit protein uL18 of Cellvibrio japonicus (strain Ueda107) (Pseudomonas fluorescens subsp. cellulosa).